The following is a 292-amino-acid chain: Probable 2-(5''-triphosphoribosyl)-3'-dephosphocoenzyme-A synthase (292 aa).

It belongs to the CitG/MdcB family.

The enzyme catalyses 3'-dephospho-CoA + ATP = 2'-(5''-triphospho-alpha-D-ribosyl)-3'-dephospho-CoA + adenine. Its function is as follows. Involved in the formation of 2-(5''-phosphoribosyl)-3'-dephosphocoenzyme-A, the prosthetic group of the acyl-carrier protein of the malonate decarboxylase. This chain is Probable 2-(5''-triphosphoribosyl)-3'-dephosphocoenzyme-A synthase, found in Azotobacter vinelandii (strain DJ / ATCC BAA-1303).